A 544-amino-acid chain; its full sequence is Cannabidiolic acid synthase (544 aa).

An N-terminal signal peptide occupies residues 1 to 28 (MKCSTFSFWFVCKIIFFFFSFNIQTSIA). A disulfide bridge links Cys-37 with Cys-99. Residues Asn-45 and Asn-65 are each glycosylated (N-linked (GlcNAc...) asparagine). One can recognise an FAD-binding PCMH-type domain in the interval 77-251 (TTPKPLVIVT…VAWKIRLVAV (175 aa)). FAD-binding positions include 109–115 (TRSGGHD) and Ser-120. A cross-link (6-(S-cysteinyl)-8alpha-(pros-histidyl)-FAD (His-Cys)) is located at residues 114-176 (HDSEGMSYIS…ENLSLAAGYC (63 aa)). N-linked (GlcNAc...) asparagine glycosylation occurs at Asn-168. Residues Cys-176, 180–184 (CAGGH), Tyr-190, Glu-236, and Ile-241 contribute to the FAD site. His-291 is a cannabigerolate binding site. Residues Asn-296, Asn-304, and Asn-328 are each glycosylated (N-linked (GlcNAc...) asparagine). The cannabigerolate site is built by Tyr-416 and Glu-441. FAD is bound at residue 480–482 (YLN). The Proton acceptor role is filled by Tyr-483. A glycan (N-linked (GlcNAc...) asparagine) is linked at Asn-498.

The protein belongs to the oxygen-dependent FAD-linked oxidoreductase family. In terms of assembly, monomer. FAD is required as a cofactor. Glycosylated. Post-translationally, the FAD cofactor is bound via a bicovalent 6-S-cysteinyl, 8alpha-N1-histidyl FAD linkage. Expressed in young leaves.

Its subcellular location is the secreted. It is found in the extracellular space. The protein localises to the apoplast. It carries out the reaction cannabigerolate + O2 = cannabidiolate + H2O2. It participates in secondary metabolite biosynthesis; terpenoid biosynthesis. With respect to regulation, inhibited by Hg(2+). Its function is as follows. Oxidoreductase involved in the biosynthesis of cannabinoids-related terpenophenolic natural products, which have pharmacological activity. Catalyzes the stereoselective oxidative cyclization of the monoterpene moiety in cannabigerolic acid (CBGA), producing cannabidiolate (CBDA), the major cannabioid in fiber-type Cannabis plants. Can also use cannabinerolic acid as substrate, but not cannabigerol or cannabinerol. The polypeptide is Cannabidiolic acid synthase (Cannabis sativa (Hemp)).